The primary structure comprises 286 residues: MRYIRLCIISLLATLPLAVHASPQPLEQIKLSESQLSGRVGMIEMDLASGRTLTAWRADERFPMMSTFKVVLCGAVLARVDAGDEQLERKIHYRQQDLVDYSPVSEKHLADGMTVGELCAAAITMSDNSAANLLLATVGGPAGLTAFLRQIGDNVTRLDRWETELNEALPGDARNTTTPASMAATLRKLLTSQRLSARSQRQLLQWMVDDRVAGPLIRSVLPAGWFIADKTGAGERGARGIVALLGPNNKAERIVVIYLRDTPASMAERNQQIAGIGAALIEHWQR.

Residues M1–A21 form the signal peptide. The active-site Acyl-ester intermediate is the S66. A disulfide bridge links C73 with C119. Residue E164 is the Proton acceptor of the active site. Residue K230–G232 participates in substrate binding.

It belongs to the class-A beta-lactamase family.

The enzyme catalyses a beta-lactam + H2O = a substituted beta-amino acid. In terms of biological role, SHV enzymes hydrolyze broad spectrum cephalosporins notably cefotaxime and ceftazidime. The protein is Beta-lactamase SHV-8 (bla) of Escherichia coli.